The sequence spans 269 residues: tRNA pseudouridine synthase A (269 aa).

Asp-52 acts as the Nucleophile in catalysis. Tyr-110 serves as a coordination point for substrate.

The protein belongs to the tRNA pseudouridine synthase TruA family. As to quaternary structure, homodimer.

The catalysed reaction is uridine(38/39/40) in tRNA = pseudouridine(38/39/40) in tRNA. Its function is as follows. Formation of pseudouridine at positions 38, 39 and 40 in the anticodon stem and loop of transfer RNAs. In Bacteroides thetaiotaomicron (strain ATCC 29148 / DSM 2079 / JCM 5827 / CCUG 10774 / NCTC 10582 / VPI-5482 / E50), this protein is tRNA pseudouridine synthase A.